The sequence spans 661 residues: DNA cross-link repair protein PSO2/SNM1 (661 aa).

Positions 1–44 (MSRKSIVQIRRSEVKRKRSSTASSTSEGKTLHKNTHTSSKRQRT) are disordered. Residues 31 to 43 (LHKNTHTSSKRQR) are compositionally biased toward basic residues. The UBZ4-type zinc-finger motif lies at 144–174 (VIQCPICLENLSHLELYERETHCDTCIGSDP). Zn(2+) contacts are provided by Cys147, Cys150, His165, and Cys169.

The protein belongs to the DNA repair metallo-beta-lactamase (DRMBL) family.

It is found in the nucleus. Its function is as follows. Required for DNA interstrand cross-link repair. This requires cleavage of cross-linked DNA to generate DNA double strand breaks (DSBs). This protein has 5' exonuclease activity on single-stranded and double-stranded DNA, which appears to be necessary for the processing of DNA double strand breaks prior to ligation. The protein is DNA cross-link repair protein PSO2/SNM1 (PSO2) of Saccharomyces cerevisiae (strain ATCC 204508 / S288c) (Baker's yeast).